The sequence spans 630 residues: Biosynthetic arginine decarboxylase (630 aa).

Lysine 99 is modified (N6-(pyridoxal phosphate)lysine). 281–291 (VDIGGGLGVDY) is a substrate binding site.

It belongs to the Orn/Lys/Arg decarboxylase class-II family. SpeA subfamily. Mg(2+) is required as a cofactor. The cofactor is pyridoxal 5'-phosphate.

It catalyses the reaction L-arginine + H(+) = agmatine + CO2. It participates in amine and polyamine biosynthesis; agmatine biosynthesis; agmatine from L-arginine: step 1/1. Functionally, catalyzes the biosynthesis of agmatine from arginine. This chain is Biosynthetic arginine decarboxylase, found in Bacteroides fragilis (strain ATCC 25285 / DSM 2151 / CCUG 4856 / JCM 11019 / LMG 10263 / NCTC 9343 / Onslow / VPI 2553 / EN-2).